Here is a 1167-residue protein sequence, read N- to C-terminus: Kinesin-like protein KIN-14M (1167 aa).

The tract at residues 93–130 (PRKENDPGTQNSEGRRKIPKNPAMSEPSSPLSQTTLSS) is disordered. A compositionally biased stretch (low complexity) spans 117–130 (SEPSSPLSQTTLSS). 3 coiled-coil regions span residues 271–333 (VHQM…KEEM), 366–398 (AKYR…AMKS), and 432–489 (KQEL…ESRS). A Kinesin motor domain is found at 572–900 (NIRVHCRIRP…LKFADRVSGV (329 aa)). An ATP-binding site is contributed by 656 to 663 (GQTGSGKT). Positions 907–944 (ANKEGKDIKEFKEQLSLLKDKIAKKDEEISRLQLQSHN) form a coiled coil. Disordered regions lie at residues 955–974 (SLLK…SKIQ) and 1083–1167 (PDQD…KRWT). Residues 958 to 972 (KHSSSSPGISSLGSK) show a composition bias toward low complexity. 2 stretches are compositionally biased toward polar residues: residues 1113–1124 (ASRTTTPKTPQS) and 1151–1167 (TQAT…KRWT).

It belongs to the TRAFAC class myosin-kinesin ATPase superfamily. Kinesin family. KIN-14 subfamily.

The sequence is that of Kinesin-like protein KIN-14M from Oryza sativa subsp. japonica (Rice).